The primary structure comprises 939 residues: Valine--tRNA ligase (939 aa).

Residues 45 to 55 carry the 'HIGH' region motif; sequence PNVTGTLHMGH. Positions 549-553 match the 'KMSKS' region motif; the sequence is KMSKS. Residue lysine 552 coordinates ATP. The stretch at 876-939 forms a coiled coil; the sequence is AAETARLRKE…KIRVQLVKLA (64 aa).

The protein belongs to the class-I aminoacyl-tRNA synthetase family. ValS type 1 subfamily. Monomer.

Its subcellular location is the cytoplasm. The enzyme catalyses tRNA(Val) + L-valine + ATP = L-valyl-tRNA(Val) + AMP + diphosphate. Functionally, catalyzes the attachment of valine to tRNA(Val). As ValRS can inadvertently accommodate and process structurally similar amino acids such as threonine, to avoid such errors, it has a 'posttransfer' editing activity that hydrolyzes mischarged Thr-tRNA(Val) in a tRNA-dependent manner. This chain is Valine--tRNA ligase, found in Chromobacterium violaceum (strain ATCC 12472 / DSM 30191 / JCM 1249 / CCUG 213 / NBRC 12614 / NCIMB 9131 / NCTC 9757 / MK).